Reading from the N-terminus, the 415-residue chain is Histidine--tRNA ligase (415 aa).

The protein belongs to the class-II aminoacyl-tRNA synthetase family. As to quaternary structure, homodimer.

It localises to the cytoplasm. It carries out the reaction tRNA(His) + L-histidine + ATP = L-histidyl-tRNA(His) + AMP + diphosphate + H(+). In Gluconobacter oxydans (strain 621H) (Gluconobacter suboxydans), this protein is Histidine--tRNA ligase.